The primary structure comprises 419 residues: Hydrolase LUC6 (419 aa).

The active site involves Ser238.

It belongs to the AB hydrolase superfamily. FUS2 hydrolase family.

It functions in the pathway mycotoxin biosynthesis. Its function is as follows. Hydrolase; part of the gene cluster that mediates the biosynthesis of the mycotoxin lucilactaene and the lucilactaene-related compound NG-391 that act as cell cycle inhibitors with potent growth inhibitory activity against malarial parasites, moderate growth inhibitory activity against cancer cells, and no activity against bacteria and fungi. Within the pathway, LUC6 may catalyze the 2-pyrrolidone ring formation to form prelucilactaene C from prelucilactaene B, followed by C-15 hydroxylation by the same enzyme to give prelucilactaene D, epoxydation to yield prelucilactaene E, and finally cyclization to yield prelucilactaene F. The pathway begins with the hybrid PKS-NRPS synthetase LUC5 which is responsible for the condensation of one acetyl-coenzyme A (CoA) unit with six malonyl-CoA units and the amide linkage of the arising heptaketide and homoserine, subsequently releasing the first intermediate prelucilactaene B. Both the cytochrome P450 monooxygenase LUC2 and the hydrolase LUC6 function in parallel in modification of prelucilactaene B. LUC6 may catalyze the 2-pyrrolidone ring formation to form prelucilactaene C from prelucilactaene B, followed by C-15 hydroxylation by the same enzyme to give prelucilactaene D, which is then converted to prelucilactaene E by epoxidation, and finally to prelucilactaene F by cyclization. Prelucilactane D, prelucilactaene E, and prelucilactaene F can be converted to dihydrolucilactaene, NG391, and lucilactaene, respectively, via C-20 methyl group hydroxylation by the cytochrome P450 monooxygenase LUC2. However, LUC2, unlike FUS8 in fusarin C biosynthesis, is not enough for the full oxidation of the C-20 methyl group into carboxylic acid, which is a prerequisite for the final methylation step. The aldehyde dehydrogenase LUC3 is involved in the biosynthesis by further oxidation of the C-20 alcoholic analog prelucilactaene G into a carboxylic derivative. This unidentified carboxylic derivative may be converted to demethyllucilactaene. As the last step, the methyltransferase LUC1 methylates the hydroxyl group at C-21 of demethyllucilactaene to generate lucilactaene. This Fusarium sp protein is Hydrolase LUC6.